Consider the following 624-residue polypeptide: MAVKQFKAESKRLLDLMINSIYTNKEIFLRELISNASDAIDKCYYRSLVDTNITFNKDDFYIRISADKENKTLTITDTGIGMTKDDLENNLGTIAKSGSFAFKSENEAKEGVDIIGQFGVGFYSAFMVADDVTVISRSVDSEEAYKWESKGVEGYTIEKCEKETPGTEIVLKIKENTDDEKYDEFLDEYKLRSLIKKYSDFIKYPIKMMTKKTRPKKDNDKETEEYLEDETLNSMVPIWRKNKNELKQEDYDNFYMDKHFGFEKPLKTIHSNVEGVVSYNTLLFIPASAPYDFYTKEFEKGLELYSNGVMIMQKCGDLLPDYFSFVQGLVDSPDLSLNISRELLQHDRQLKFIAKKIKEKIKSELLSMAKNDRENYVKFFNSFGRQLKYGVYSDFGSNKEVLQDLLMFYSSTEKKLVTLDEYVSRMKEDQKYIYYAAGESNEKIEKLPQTEVVKDKGYEILYFTDDVDEFAIKMLMKYKEKEFKSVSNKDLGFEADEKESKKETEENKDLFDFMKEVLDGKVKEVRASSRLKSHPVCLSNDGELSIEMEKVLKMMPDNNNVKAEKILEINTNHEMFNSIKAAFKDDKDKLKKYASLLYNEALLIEGLPIEDPVQFANDVASLMK.

Positions 1–341 (MAVKQFKAES…SPDLSLNISR (341 aa)) are a; substrate-binding. The segment at 342–550 (ELLQHDRQLK…DGELSIEMEK (209 aa)) is b. The c stretch occupies residues 551-624 (VLKMMPDNNN…FANDVASLMK (74 aa)).

It belongs to the heat shock protein 90 family. In terms of assembly, homodimer.

It localises to the cytoplasm. Functionally, molecular chaperone. Has ATPase activity. This Clostridium acetobutylicum (strain ATCC 824 / DSM 792 / JCM 1419 / IAM 19013 / LMG 5710 / NBRC 13948 / NRRL B-527 / VKM B-1787 / 2291 / W) protein is Chaperone protein HtpG.